The sequence spans 127 residues: Large ribosomal subunit protein bL17 (127 aa).

It belongs to the bacterial ribosomal protein bL17 family. In terms of assembly, part of the 50S ribosomal subunit. Contacts protein L32.

This chain is Large ribosomal subunit protein bL17, found in Legionella pneumophila (strain Lens).